The chain runs to 73 residues: Conotoxin Bt11.1 (73 aa).

Residues 1–20 (MKLCVAFLLVLVILPSVIGG) form the signal peptide. Positions 21-35 (KPSERTLSGATRRGD) are excised as a propeptide. 4 disulfides stabilise this stretch: cysteine 39-cysteine 53, cysteine 46-cysteine 58, cysteine 52-cysteine 63, and cysteine 57-cysteine 70.

Belongs to the conotoxin I1 superfamily. In terms of tissue distribution, expressed by the venom duct.

Its subcellular location is the secreted. The sequence is that of Conotoxin Bt11.1 from Conus betulinus (Beech cone).